A 179-amino-acid chain; its full sequence is Large ribosomal subunit protein uL6 (179 aa).

It belongs to the universal ribosomal protein uL6 family. In terms of assembly, part of the 50S ribosomal subunit.

Its function is as follows. This protein binds to the 23S rRNA, and is important in its secondary structure. It is located near the subunit interface in the base of the L7/L12 stalk, and near the tRNA binding site of the peptidyltransferase center. This Chlorobium chlorochromatii (strain CaD3) protein is Large ribosomal subunit protein uL6.